The chain runs to 419 residues: Metacaspase-1A (419 aa).

The segment at 1–89 (MHHQQSSYGG…PPDQPVSFGQ (89 aa)) is disordered. A compositionally biased stretch (polar residues) spans 41–51 (NGYNSPQQNYG). Low complexity predominate over residues 59–71 (YQQQSAYQNSYNQ). Catalysis depends on residues His190 and Cys246.

This sequence belongs to the peptidase C14B family.

Its function is as follows. Involved in cell death (apoptosis). The polypeptide is Metacaspase-1A (casA) (Aspergillus oryzae (strain ATCC 42149 / RIB 40) (Yellow koji mold)).